The following is a 320-amino-acid chain: Adhesin MafA 3 (320 aa).

The N-terminal stretch at 1–18 (MQARLLIPILFSVFILSA) is a signal peptide. Cys-19 is lipidated: N-palmitoyl cysteine. The S-diacylglycerol cysteine moiety is linked to residue Cys-19. Polar residues predominate over residues 288–298 (HTGNSAPSVET). Residues 288–320 (HTGNSAPSVETDNSHEGYGYSDEVVRQHRQGQP) form a disordered region.

The protein belongs to the MafA family.

The protein localises to the cell outer membrane. The chain is Adhesin MafA 3 (mafA3) from Neisseria meningitidis serogroup C / serotype 2a (strain ATCC 700532 / DSM 15464 / FAM18).